We begin with the raw amino-acid sequence, 230 residues long: Porin OmpL (230 aa).

An N-terminal signal peptide occupies residues 1–20; sequence MKKINAIILLSSLTSASVFA.

It belongs to the oligogalacturonate-specific porin KdgM (TC 1.B.35) family. OmpL subfamily.

The protein localises to the cell outer membrane. Its function is as follows. Outer membrane channel protein that allows an efficient diffusion of low-molecular-weight solutes such as small sugars and tetraglycine. However, the specific substrate recognized by the OmpL channel is unknown. The sequence is that of Porin OmpL (ompL) from Escherichia coli (strain K12).